Consider the following 221-residue polypeptide: Uracil-DNA glycosylase (221 aa).

D63 acts as the Proton acceptor in catalysis.

This sequence belongs to the uracil-DNA glycosylase (UDG) superfamily. UNG family.

The protein resides in the cytoplasm. The catalysed reaction is Hydrolyzes single-stranded DNA or mismatched double-stranded DNA and polynucleotides, releasing free uracil.. Excises uracil residues from the DNA which can arise as a result of misincorporation of dUMP residues by DNA polymerase or due to deamination of cytosine. In Blochmanniella floridana, this protein is Uracil-DNA glycosylase.